We begin with the raw amino-acid sequence, 397 residues long: Nicotinate phosphoribosyltransferase (397 aa).

Phosphohistidine; by autocatalysis is present on H221.

Belongs to the NAPRTase family. Post-translationally, transiently phosphorylated on a His residue during the reaction cycle. Phosphorylation strongly increases the affinity for substrates and increases the rate of nicotinate D-ribonucleotide production. Dephosphorylation regenerates the low-affinity form of the enzyme, leading to product release.

The enzyme catalyses nicotinate + 5-phospho-alpha-D-ribose 1-diphosphate + ATP + H2O = nicotinate beta-D-ribonucleotide + ADP + phosphate + diphosphate. It functions in the pathway cofactor biosynthesis; NAD(+) biosynthesis; nicotinate D-ribonucleotide from nicotinate: step 1/1. In terms of biological role, catalyzes the synthesis of beta-nicotinate D-ribonucleotide from nicotinate and 5-phospho-D-ribose 1-phosphate at the expense of ATP. This Herminiimonas arsenicoxydans protein is Nicotinate phosphoribosyltransferase.